The sequence spans 236 residues: tRNA (guanine-N(7)-)-methyltransferase (236 aa).

The S-adenosyl-L-methionine site is built by D35, E60, N87, and D113. D113 is an active-site residue. Positions 117 and 149 each coordinate substrate.

This sequence belongs to the class I-like SAM-binding methyltransferase superfamily. TrmB family.

The catalysed reaction is guanosine(46) in tRNA + S-adenosyl-L-methionine = N(7)-methylguanosine(46) in tRNA + S-adenosyl-L-homocysteine. Its pathway is tRNA modification; N(7)-methylguanine-tRNA biosynthesis. In terms of biological role, catalyzes the formation of N(7)-methylguanine at position 46 (m7G46) in tRNA. This is tRNA (guanine-N(7)-)-methyltransferase from Prochlorococcus marinus (strain MIT 9313).